A 420-amino-acid polypeptide reads, in one-letter code: Gamma-glutamyl phosphate reductase (420 aa).

The protein belongs to the gamma-glutamyl phosphate reductase family.

Its subcellular location is the cytoplasm. It carries out the reaction L-glutamate 5-semialdehyde + phosphate + NADP(+) = L-glutamyl 5-phosphate + NADPH + H(+). It functions in the pathway amino-acid biosynthesis; L-proline biosynthesis; L-glutamate 5-semialdehyde from L-glutamate: step 2/2. Functionally, catalyzes the NADPH-dependent reduction of L-glutamate 5-phosphate into L-glutamate 5-semialdehyde and phosphate. The product spontaneously undergoes cyclization to form 1-pyrroline-5-carboxylate. The chain is Gamma-glutamyl phosphate reductase from Shewanella denitrificans (strain OS217 / ATCC BAA-1090 / DSM 15013).